We begin with the raw amino-acid sequence, 215 residues long: Endonuclease III (215 aa).

Positions 113–132 (REDLESLPGVGRKTANVILN) constitute a HhH domain. Residues Cys-192, Cys-199, Cys-202, and Cys-208 each contribute to the [4Fe-4S] cluster site.

The protein belongs to the Nth/MutY family. [4Fe-4S] cluster serves as cofactor.

The catalysed reaction is 2'-deoxyribonucleotide-(2'-deoxyribose 5'-phosphate)-2'-deoxyribonucleotide-DNA = a 3'-end 2'-deoxyribonucleotide-(2,3-dehydro-2,3-deoxyribose 5'-phosphate)-DNA + a 5'-end 5'-phospho-2'-deoxyribonucleoside-DNA + H(+). Its function is as follows. DNA repair enzyme that has both DNA N-glycosylase activity and AP-lyase activity. The DNA N-glycosylase activity releases various damaged pyrimidines from DNA by cleaving the N-glycosidic bond, leaving an AP (apurinic/apyrimidinic) site. The AP-lyase activity cleaves the phosphodiester bond 3' to the AP site by a beta-elimination, leaving a 3'-terminal unsaturated sugar and a product with a terminal 5'-phosphate. This is Endonuclease III from Buchnera aphidicola subsp. Baizongia pistaciae (strain Bp).